Here is a 1219-residue protein sequence, read N- to C-terminus: Pheromone-regulated membrane protein 10 (1219 aa).

Basic and acidic residues predominate over residues 1–11 (MMRTQSDEHVA). Disordered stretches follow at residues 1-273 (MMRT…IERE), 303-490 (LASF…DPFT), 503-533 (HDDD…EDYV), and 555-713 (EGNK…RPVK). A compositionally biased stretch (acidic residues) spans 42–53 (DENDDGHDDSDE). Residues 57–68 (SVVIPTPSVVIV) are compositionally biased toward low complexity. Positions 104 to 115 (LKSPGTPTTYSP) are enriched in polar residues. The segment covering 136 to 155 (GSSLSSTTLMNTLLNSSGLG) has biased composition (low complexity). Composition is skewed to acidic residues over residues 159–171 (TESE…DEEV) and 219–231 (QEEE…DDDG). Composition is skewed to basic and acidic residues over residues 259-273 (ADRA…IERE), 330-346 (DDQR…RREN), and 395-421 (LDRR…EKER). Basic residues predominate over residues 422-432 (QHHHHNHHHHH). The span at 435 to 446 (ETGPNTGASSPF) shows a compositional bias: polar residues. The span at 448-470 (EEEKDREAEEAEILRDQARDLVN) shows a compositional bias: basic and acidic residues. A compositionally biased stretch (low complexity) spans 565–577 (TTVGDGTSTGDVS). Positions 598–615 (KSKTKTTQKLGLKKKKKE) are enriched in basic residues. Over residues 616 to 641 (LLKIIEDQRKEKEENKKRPKWYDKSR) the composition is skewed to basic and acidic residues. Over residues 642-652 (STSPSPGGTPA) the composition is skewed to low complexity. Over residues 653–673 (PHHHHHIPGLHLHHHTKGHQR) the composition is skewed to basic residues. Residues 693–713 (GGDKPPDRPRSLRSEALRPVK) are compositionally biased toward basic and acidic residues. A run of 10 helical transmembrane segments spans residues 864-884 (PPWL…PYAF), 888-908 (WADI…QIIV), 918-938 (VFEV…GTIS), 945-965 (FCFA…YIVL), 983-1003 (MFYA…GAVV), 1021-1041 (LDPL…ALVN), 1049-1069 (PSML…GANI), 1075-1095 (SSYL…NLYS), 1100-1120 (GLAF…GVAS), and 1184-1204 (LGFT…AATL).

This sequence belongs to the ThrE exporter (TC 2.A.79) family.

The protein localises to the membrane. This Yarrowia lipolytica (strain CLIB 122 / E 150) (Yeast) protein is Pheromone-regulated membrane protein 10.